Here is a 1059-residue protein sequence, read N- to C-terminus: Endo-1,4-beta-xylanase A (1059 aa).

The first 30 residues, methionine 1–alanine 30, serve as a signal peptide directing secretion. Residues serine 47–lysine 199 are A-1. An A-2 region spans residues glutamate 200–serine 354. The GH10 domain occupies glutamate 364–proline 692. Glutamate 502 acts as the Proton donor in catalysis. Glutamate 608 functions as the Nucleophile in the catalytic mechanism. CBM-cenC domains are found at residues lysine 700 to isoleucine 870 and methionine 871 to lysine 1059.

The protein belongs to the glycosyl hydrolase 10 (cellulase F) family.

It carries out the reaction Endohydrolysis of (1-&gt;4)-beta-D-xylosidic linkages in xylans.. This Thermotoga maritima (strain ATCC 43589 / DSM 3109 / JCM 10099 / NBRC 100826 / MSB8) protein is Endo-1,4-beta-xylanase A (xynA).